The chain runs to 58 residues: Ribosome modulation factor (58 aa).

Belongs to the ribosome modulation factor family.

The protein localises to the cytoplasm. Its function is as follows. During stationary phase, converts 70S ribosomes to an inactive dimeric form (100S ribosomes). This is Ribosome modulation factor from Shewanella amazonensis (strain ATCC BAA-1098 / SB2B).